Reading from the N-terminus, the 415-residue chain is Levansucrase (415 aa).

Residues tryptophan 45, aspartate 46, alanine 132, arginine 202, and aspartate 203 each contribute to the sucrose site. The active-site Nucleophile is the aspartate 46. The active-site Proton donor/acceptor is glutamate 287.

This sequence belongs to the glycosyl hydrolase 68 family.

The protein localises to the secreted. It carries out the reaction [6)-beta-D-fructofuranosyl-(2-&gt;](n) alpha-D-glucopyranoside + sucrose = [6)-beta-D-fructofuranosyl-(2-&gt;](n+1) alpha-D-glucopyranoside + D-glucose. In terms of biological role, catalyzes the synthesis of levan, a fructose polymer, by transferring the fructosyl moiety from sucrose to a growing acceptor molecule. This is Levansucrase from Erwinia amylovora (Fire blight bacteria).